The chain runs to 301 residues: Probable alpha-L-glutamate ligase (301 aa).

The 184-residue stretch at 104 to 287 (LQLLSRKGIG…IAGIIIQYLE (184 aa)) folds into the ATP-grasp domain. ATP is bound by residues K141, 178 to 179 (EY), D187, and 211 to 213 (RSN). Positions 248, 260, and 262 each coordinate Mg(2+). Residues D248, E260, and N262 each coordinate Mn(2+).

Belongs to the RimK family. It depends on Mg(2+) as a cofactor. Mn(2+) serves as cofactor.

The chain is Probable alpha-L-glutamate ligase from Pseudomonas aeruginosa (strain UCBPP-PA14).